The chain runs to 155 residues: 6,7-dimethyl-8-ribityllumazine synthase (155 aa).

5-amino-6-(D-ribitylamino)uracil is bound by residues Phe23, Ala57–Glu59, and Ala81–Ile83. Ala86–Thr87 is a binding site for (2S)-2-hydroxy-3-oxobutyl phosphate. The Proton donor role is filled by His89. Phe114 lines the 5-amino-6-(D-ribitylamino)uracil pocket. Position 128 (Arg128) interacts with (2S)-2-hydroxy-3-oxobutyl phosphate.

It belongs to the DMRL synthase family.

It catalyses the reaction (2S)-2-hydroxy-3-oxobutyl phosphate + 5-amino-6-(D-ribitylamino)uracil = 6,7-dimethyl-8-(1-D-ribityl)lumazine + phosphate + 2 H2O + H(+). Its pathway is cofactor biosynthesis; riboflavin biosynthesis; riboflavin from 2-hydroxy-3-oxobutyl phosphate and 5-amino-6-(D-ribitylamino)uracil: step 1/2. Its function is as follows. Catalyzes the formation of 6,7-dimethyl-8-ribityllumazine by condensation of 5-amino-6-(D-ribitylamino)uracil with 3,4-dihydroxy-2-butanone 4-phosphate. This is the penultimate step in the biosynthesis of riboflavin. This Geotalea daltonii (strain DSM 22248 / JCM 15807 / FRC-32) (Geobacter daltonii) protein is 6,7-dimethyl-8-ribityllumazine synthase.